A 317-amino-acid polypeptide reads, in one-letter code: MKQLQDEITQALTKLDGGSEFHEDSWERPEGGGGRSRVLRDGAIFEQAGVNFSEVWGSHLPPSILAQRPEAEGHGFYATGTSLVLHPRNPYVPTVHLNYRYFEAGPVWWFGGGADLTPYYPFAEDAAHFHQTLKLACDEHHPEYYPVFKRWCDEYFYLKHRDETRGVGGLFFDYQDGQGVLYRGPNPKGEAANYSNQVGEPASRDWEDLFSFIQGSGKAFLPAYVPIVERRHGMEYGDRQRNFQLYRRGRYVEFNLVYDRGTIFGLQTNGRTESILMSLPPLVRWEYGYQPEPNSPEAELYDTFLKPQDWSNWTANQ.

Residues 38–47 (VLRDGAIFEQ) are important for dimerization. A substrate-binding site is contributed by Ser-82. His-96 functions as the Proton donor in the catalytic mechanism. Substrate is bound by residues 98–100 (NYR) and 269–274 (NGRTES). Positions 251 to 286 (YVEFNLVYDRGTIFGLQTNGRTESILMSLPPLVRWE) are important for dimerization.

The protein belongs to the aerobic coproporphyrinogen-III oxidase family. Homodimer.

The protein localises to the cytoplasm. It carries out the reaction coproporphyrinogen III + O2 + 2 H(+) = protoporphyrinogen IX + 2 CO2 + 2 H2O. It functions in the pathway porphyrin-containing compound metabolism; protoporphyrin-IX biosynthesis; protoporphyrinogen-IX from coproporphyrinogen-III (O2 route): step 1/1. Functionally, key enzyme in heme biosynthesis. Catalyzes the oxidative decarboxylation of propionic acid side chains of rings A and B of coproporphyrinogen III. This Nostoc sp. (strain PCC 7120 / SAG 25.82 / UTEX 2576) protein is Coproporphyrinogen-III oxidase, aerobic 1.